A 205-amino-acid chain; its full sequence is FAS-associated death domain protein (205 aa).

Positions proline 3–aspartate 81 constitute a DED domain. In terms of domain architecture, Death spans leucine 97–glutamine 181. The tract at residues glutamine 181 to proline 205 is disordered. Serine 191 carries the post-translational modification Phosphoserine.

In terms of assembly, can self-associate. Component of the AIM2 PANoptosome complex, a multiprotein complex that drives inflammatory cell death (PANoptosis). Component of the death-induced signaling complex (DISC) composed of cell surface receptor FAS/CD95 or TNFRSF1A, adapter protein FADD and the CASP8 protease; recruitment of CASP8 to the complex is required for processing of CASP8 into the p18 and p10 subunits. Interacts (via death domain) with FAS (via death domain). Interacts directly (via DED domain) with NOL3 (via CARD domain); inhibits death-inducing signaling complex (DISC) assembly by inhibiting the increase in FAS-FADD binding induced by FAS activation. Interacts with CFLAR, PEA15 and MBD4. When phosphorylated, part of a complex containing HIPK3 and FAS. May interact with MAVS/IPS1. Interacts with MOCV v-CFLAR protein and PIDD1. Interacts with RIPK1 and TRADD. Interacts with stimulated TNFRSF10B. Interacts with DDX24.

Its subcellular location is the cytoplasm. In terms of biological role, apoptotic adapter molecule that recruits caspases CASP8 or CASP10 to the activated FAS/CD95 or TNFRSF1A/TNFR-1 receptors. The resulting aggregate called the death-inducing signaling complex (DISC) performs CASP8 proteolytic activation. Active CASP8 initiates the subsequent cascade of caspases mediating apoptosis. Involved in interferon-mediated antiviral immune response, playing a role in the positive regulation of interferon signaling. This is FAS-associated death domain protein from Mus musculus (Mouse).